Here is a 117-residue protein sequence, read N- to C-terminus: UPF0102 protein Spro_4337 (117 aa).

The protein belongs to the UPF0102 family.

This Serratia proteamaculans (strain 568) protein is UPF0102 protein Spro_4337.